Here is a 577-residue protein sequence, read N- to C-terminus: Hemagglutinin-neuraminidase (577 aa).

At 1–26 (MDRAVSQVALENDEREAKNTWRLIFR) the chain is on the intravirion side. Residues 27–47 (IAILLLTVVTLATSVASLVYS) form a helical membrane-spanning segment. At 48–577 (MGASTPSDLV…NDGVREARSG (530 aa)) the chain is on the virion surface side. N-linked (GlcNAc...) asparagine; by host glycosylation is present at Asn-119. The important for interaction with fusion/F protein stretch occupies residues 124–152 (GAPIHDPDFIGGIGKELIVDDASDVTSFY). Disulfide bonds link Cys-172-Cys-196, Cys-186-Cys-247, and Cys-238-Cys-251. The involved in neuraminidase activity stretch occupies residues 234-239 (NRKSCS). N-linked (GlcNAc...) asparagine; by host glycosylation is found at Asn-341 and Asn-433. 2 disulfide bridges follow: Cys-344/Cys-461 and Cys-455/Cys-465. N-linked (GlcNAc...) asparagine; by host glycans are attached at residues Asn-481 and Asn-538. A disulfide bridge links Cys-531 with Cys-542.

The protein belongs to the paramyxoviruses hemagglutinin-neuraminidase family. Homotetramer; composed of disulfide-linked homodimers. Interacts with F protein trimer. Interacts with host CG-1B; this interaction inhibits viral adsorption and replication rather than internalization.

The protein resides in the virion membrane. It is found in the host cell membrane. It carries out the reaction Hydrolysis of alpha-(2-&gt;3)-, alpha-(2-&gt;6)-, alpha-(2-&gt;8)- glycosidic linkages of terminal sialic acid residues in oligosaccharides, glycoproteins, glycolipids, colominic acid and synthetic substrates.. Its function is as follows. Mediates the viral entry into the host cell together with fusion/F protein. Attaches the virus to sialic acid-containing cell receptors and thereby initiates infection. Binding of HN protein to the receptor induces a conformational change that allows the F protein to trigger virion/cell membranes fusion. In terms of biological role, neuraminidase activity ensures the efficient spread of the virus by dissociating the mature virions from the neuraminic acid containing glycoproteins. In Gallus gallus (Chicken), this protein is Hemagglutinin-neuraminidase (HN).